The sequence spans 271 residues: uncharacterized protein (271 aa).

Transmembrane regions (helical) follow at residues 30-50 (IWFPIVVGIIASAVGMFGMLL), 189-209 (ALAAVIEELLVNIATAIYFLI), and 218-238 (FLVTVGSSLTYLSNIPMIFAC).

The protein localises to the cell membrane. This is an uncharacterized protein from Aquifex aeolicus (strain VF5).